The sequence spans 131 residues: Profilin-3 (131 aa).

It belongs to the profilin family. Occurs in many kinds of cells as a complex with monomeric actin in a 1:1 ratio.

Its subcellular location is the cytoplasm. The protein resides in the cytoskeleton. Functionally, binds to actin and affects the structure of the cytoskeleton. At high concentrations, profilin prevents the polymerization of actin, whereas it enhances it at low concentrations. By binding to PIP2, it inhibits the formation of IP3 and DG. This is Profilin-3 (PRO3) from Triticum aestivum (Wheat).